The following is a 559-amino-acid chain: Glucose-6-phosphate isomerase (559 aa).

Glutamate 363 (proton donor) is an active-site residue. Residues histidine 394 and lysine 523 contribute to the active site.

The protein belongs to the GPI family.

It localises to the cytoplasm. It catalyses the reaction alpha-D-glucose 6-phosphate = beta-D-fructose 6-phosphate. It functions in the pathway carbohydrate biosynthesis; gluconeogenesis. Its pathway is carbohydrate degradation; glycolysis; D-glyceraldehyde 3-phosphate and glycerone phosphate from D-glucose: step 2/4. In terms of biological role, catalyzes the reversible isomerization of glucose-6-phosphate to fructose-6-phosphate. The sequence is that of Glucose-6-phosphate isomerase from Bartonella quintana (strain Toulouse) (Rochalimaea quintana).